The chain runs to 433 residues: tRNA(Ile)-lysidine synthase (433 aa).

37-42 (SGGKDS) lines the ATP pocket.

The protein belongs to the tRNA(Ile)-lysidine synthase family.

The protein localises to the cytoplasm. The enzyme catalyses cytidine(34) in tRNA(Ile2) + L-lysine + ATP = lysidine(34) in tRNA(Ile2) + AMP + diphosphate + H(+). In terms of biological role, ligates lysine onto the cytidine present at position 34 of the AUA codon-specific tRNA(Ile) that contains the anticodon CAU, in an ATP-dependent manner. Cytidine is converted to lysidine, thus changing the amino acid specificity of the tRNA from methionine to isoleucine. This chain is tRNA(Ile)-lysidine synthase, found in Leptospira interrogans serogroup Icterohaemorrhagiae serovar Lai (strain 56601).